Reading from the N-terminus, the 217-residue chain is Probable GTP-binding protein EngB (217 aa).

The 174-residue stretch at 44–217 (DRVEVCFAGR…TLRSIIAHLE (174 aa)) folds into the EngB-type G domain. GTP is bound by residues 52–59 (GRSNVGKS), 79–83 (GRTQE), 97–100 (DLPG), 164–167 (TKAD), and 198–200 (TSS). Mg(2+)-binding residues include S59 and T81.

Belongs to the TRAFAC class TrmE-Era-EngA-EngB-Septin-like GTPase superfamily. EngB GTPase family. Mg(2+) is required as a cofactor.

Necessary for normal cell division and for the maintenance of normal septation. The sequence is that of Probable GTP-binding protein EngB from Ruegeria pomeroyi (strain ATCC 700808 / DSM 15171 / DSS-3) (Silicibacter pomeroyi).